Reading from the N-terminus, the 377-residue chain is Sterol 24-C-methyltransferase erg6 (377 aa).

It belongs to the class I-like SAM-binding methyltransferase superfamily. Erg6/SMT family.

The protein resides in the microsome. It localises to the mitochondrion. It carries out the reaction lanosterol + S-adenosyl-L-methionine = eburicol + S-adenosyl-L-homocysteine + H(+). It participates in steroid metabolism; ergosterol biosynthesis. Its activity is regulated as follows. Specific and total activity is decreased in presence of alpha-bisabolol. In terms of biological role, sterol 24-C-methyltransferase; part of the third module of ergosterol biosynthesis pathway that includes the late steps of the pathway. Methylates lanosterol at C-24 to produce eburicol. The third module or late pathway involves the ergosterol synthesis itself through consecutive reactions that mainly occur in the endoplasmic reticulum (ER) membrane. Firstly, the squalene synthase erg9 catalyzes the condensation of 2 farnesyl pyrophosphate moieties to form squalene, which is the precursor of all steroids. Squalene synthase is crucial for balancing the incorporation of farnesyl diphosphate (FPP) into sterol and nonsterol isoprene synthesis. Secondly, squalene is converted into lanosterol by the consecutive action of the squalene epoxidase erg1 and the lanosterol synthase erg7. Then, the delta(24)-sterol C-methyltransferase erg6 methylates lanosterol at C-24 to produce eburicol. Eburicol is the substrate of the sterol 14-alpha demethylase encoded by cyp51A and cyp51B, to yield 4,4,24-trimethyl ergosta-8,14,24(28)-trienol. The C-14 reductase erg24 then reduces the C14=C15 double bond which leads to 4,4-dimethylfecosterol. A sequence of further demethylations at C-4, involving the C-4 demethylation complex containing the C-4 methylsterol oxidases erg25A or erg25B, the sterol-4-alpha-carboxylate 3-dehydrogenase erg26 and the 3-keto-steroid reductase erg27, leads to the production of fecosterol via 4-methylfecosterol. The C-8 sterol isomerase erg2 then catalyzes the reaction which results in unsaturation at C-7 in the B ring of sterols and thus converts fecosterol to episterol. The sterol-C5-desaturase erg3B then catalyzes the introduction of a C-5 double bond in the B ring to produce 5-dehydroepisterol. The 2 other sterol-C5-desaturases, erg3A and erg3C, seem to be less important in ergosterol biosynthesis. The C-22 sterol desaturase erg5 further converts 5-dehydroepisterol into ergosta-5,7,22,24(28)-tetraen-3beta-ol by forming the C-22(23) double bond in the sterol side chain. Finally, ergosta-5,7,22,24(28)-tetraen-3beta-ol is substrate of the C-24(28) sterol reductases erg4A and erg4B to produce ergosterol. Possible alternative sterol biosynthetic pathways might exist from fecosterol to ergosterol, depending on the activities of the erg3 isoforms. In Aspergillus fumigatus (strain ATCC MYA-4609 / CBS 101355 / FGSC A1100 / Af293) (Neosartorya fumigata), this protein is Sterol 24-C-methyltransferase erg6.